Reading from the N-terminus, the 299-residue chain is Oxygen-dependent coproporphyrinogen-III oxidase (299 aa).

S92 is a substrate binding site. H96 and H106 together coordinate a divalent metal cation. The Proton donor role is filled by H106. Substrate is bound at residue 108–110 (NVR). H145 and H175 together coordinate a divalent metal cation. The segment at 240-275 (YVEFNLVWDRGTLFGLQTGGRTESILMSMPPLVRWE) is important for dimerization. 258–260 (GGR) is a substrate binding site.

This sequence belongs to the aerobic coproporphyrinogen-III oxidase family. Homodimer. The cofactor is a divalent metal cation.

The protein localises to the cytoplasm. It catalyses the reaction coproporphyrinogen III + O2 + 2 H(+) = protoporphyrinogen IX + 2 CO2 + 2 H2O. It functions in the pathway porphyrin-containing compound metabolism; protoporphyrin-IX biosynthesis; protoporphyrinogen-IX from coproporphyrinogen-III (O2 route): step 1/1. Functionally, involved in the heme biosynthesis. Catalyzes the aerobic oxidative decarboxylation of propionate groups of rings A and B of coproporphyrinogen-III to yield the vinyl groups in protoporphyrinogen-IX. This Salmonella enteritidis PT4 (strain P125109) protein is Oxygen-dependent coproporphyrinogen-III oxidase.